A 183-amino-acid polypeptide reads, in one-letter code: MGKFPLREQSIVLIGFMGVGKTTIGKTVAKKLYRDFIDIDEEIEKRFKMPTKDIFRLYGEKTFRNAEKDIISEICQQRLKVVSLGGGAFLQKEIQEICLNSSIIFYLDLSWDRWKDRIELLMESRPVLQGKTMKEMKQLYEDRKPIYEQHHSRVDTDYHEIEEVADYIAESLKLAWDIYEPTS.

Residue 18–23 (GVGKTT) participates in ATP binding. Mg(2+) is bound at residue T22. Substrate contacts are provided by D40, R64, and G86. Residue R125 participates in ATP binding. Residue R143 coordinates substrate.

Belongs to the shikimate kinase family. Monomer. It depends on Mg(2+) as a cofactor.

It is found in the cytoplasm. It carries out the reaction shikimate + ATP = 3-phosphoshikimate + ADP + H(+). Its pathway is metabolic intermediate biosynthesis; chorismate biosynthesis; chorismate from D-erythrose 4-phosphate and phosphoenolpyruvate: step 5/7. Its function is as follows. Catalyzes the specific phosphorylation of the 3-hydroxyl group of shikimic acid using ATP as a cosubstrate. The chain is Shikimate kinase from Oceanobacillus iheyensis (strain DSM 14371 / CIP 107618 / JCM 11309 / KCTC 3954 / HTE831).